The sequence spans 125 residues: Small ribosomal subunit protein uS12m (125 aa).

The tract at residues 1–26 (MPTINQLLRKKSSRQAPKLKSKKPAL) is disordered. Residues 8–23 (LRKKSSRQAPKLKSKK) show a composition bias toward basic residues.

It belongs to the universal ribosomal protein uS12 family.

Its subcellular location is the mitochondrion. In Prototheca wickerhamii, this protein is Small ribosomal subunit protein uS12m (RPS12).